The chain runs to 357 residues: Putative diaminopimelate epimerase, chloroplastic (357 aa).

The N-terminal 47 residues, 1 to 47 (MSSATAAATATIAAAAAAAAKLAATPAPAPSRRRLTLRGNPTARRCV), are a transit peptide targeting the chloroplast. Active-site residues include Cys-145 and Cys-300.

Belongs to the diaminopimelate epimerase family.

The protein localises to the plastid. The protein resides in the chloroplast. It carries out the reaction (2S,6S)-2,6-diaminopimelate = meso-2,6-diaminopimelate. The protein operates within amino-acid biosynthesis; L-lysine biosynthesis via DAP pathway; DL-2,6-diaminopimelate from LL-2,6-diaminopimelate: step 1/1. The chain is Putative diaminopimelate epimerase, chloroplastic (DAPF) from Oryza sativa subsp. indica (Rice).